Reading from the N-terminus, the 126-residue chain is Holo-[acyl-carrier-protein] synthase (126 aa).

D9 and E58 together coordinate Mg(2+).

Belongs to the P-Pant transferase superfamily. AcpS family. Requires Mg(2+) as cofactor.

It localises to the cytoplasm. It catalyses the reaction apo-[ACP] + CoA = holo-[ACP] + adenosine 3',5'-bisphosphate + H(+). Its function is as follows. Transfers the 4'-phosphopantetheine moiety from coenzyme A to a Ser of acyl-carrier-protein. The protein is Holo-[acyl-carrier-protein] synthase of Vibrio parahaemolyticus serotype O3:K6 (strain RIMD 2210633).